The following is a 297-amino-acid chain: 3-methyl-2-oxobutanoate hydroxymethyltransferase (297 aa).

Residues 1–12 (MSEQISEQSEQN) show a composition bias toward polar residues. Residues 1–36 (MSEQISEQSEQNVYGACPPVPAGESSPSAASAPRTK) are disordered. Positions 22 to 33 (AGESSPSAASAP) are enriched in low complexity. Residues D78 and D117 each coordinate Mg(2+). 3-methyl-2-oxobutanoate-binding positions include 78 to 79 (DS), D117, and K147. E149 provides a ligand contact to Mg(2+). The active-site Proton acceptor is E215.

The protein belongs to the PanB family. In terms of assembly, homodecamer; pentamer of dimers. It depends on Mg(2+) as a cofactor.

Its subcellular location is the cytoplasm. The catalysed reaction is 3-methyl-2-oxobutanoate + (6R)-5,10-methylene-5,6,7,8-tetrahydrofolate + H2O = 2-dehydropantoate + (6S)-5,6,7,8-tetrahydrofolate. It functions in the pathway cofactor biosynthesis; (R)-pantothenate biosynthesis; (R)-pantoate from 3-methyl-2-oxobutanoate: step 1/2. Functionally, catalyzes the reversible reaction in which hydroxymethyl group from 5,10-methylenetetrahydrofolate is transferred onto alpha-ketoisovalerate to form ketopantoate. This Mycobacterium ulcerans (strain Agy99) protein is 3-methyl-2-oxobutanoate hydroxymethyltransferase.